The sequence spans 130 residues: Glycine cleavage system H protein (130 aa).

Residues 22 to 103 (KAYIGISDCA…PYGSWIIAVE (82 aa)) form the Lipoyl-binding domain. At lysine 63 the chain carries N6-lipoyllysine.

This sequence belongs to the GcvH family. The glycine cleavage system is composed of four proteins: P, T, L and H. It depends on (R)-lipoate as a cofactor.

Functionally, the glycine cleavage system catalyzes the degradation of glycine. The H protein shuttles the methylamine group of glycine from the P protein to the T protein. This Clostridium botulinum (strain Kyoto / Type A2) protein is Glycine cleavage system H protein.